Consider the following 432-residue polypeptide: Trigger factor (432 aa).

The PPIase FKBP-type domain maps to 163-248; sequence GDIAVIDFEG…LKALNKKELP (86 aa).

This sequence belongs to the FKBP-type PPIase family. Tig subfamily.

It localises to the cytoplasm. It carries out the reaction [protein]-peptidylproline (omega=180) = [protein]-peptidylproline (omega=0). Functionally, involved in protein export. Acts as a chaperone by maintaining the newly synthesized protein in an open conformation. Functions as a peptidyl-prolyl cis-trans isomerase. The sequence is that of Trigger factor from Thermoanaerobacter pseudethanolicus (strain ATCC 33223 / 39E) (Clostridium thermohydrosulfuricum).